A 375-amino-acid polypeptide reads, in one-letter code: MTDLDPVVLAERLIDCPSITPATGAVFDCLQAMLEPLGFAIHRFVAGEAPDGPVENLFAIRKGPEGARHFAFAGHLDVVPPGEGWTSGPFKAERRGELLYGRGAVDMKGSIAAMVAAVAEIPADAGTLSFIITGDEEGPARYGTVPLIDLIRQLGAEPDLCLVGEPTSVHRLGDMVKIGRRGSVNMWIACKGAQGHVAYPHLADNPIPRLVALLADLDALVLDGGTEWFQPSNLEITDLEVGNPATNVIPAEARARISIRFNDRHTGAELVARVEEIAHRHKGEVRAVISGESFITLPGAFSAMIADAVKAETGLDPELSTSGGTSDARFLRAVCPVVEFGLCNATMHKKDEAVAMEDLRVLQRIYRRIALSALS.

H75 contacts Zn(2+). The active site involves D77. Position 106 (D106) interacts with Zn(2+). The active-site Proton acceptor is E136. Zn(2+) is bound by residues E137, E165, and H348.

The protein belongs to the peptidase M20A family. DapE subfamily. As to quaternary structure, homodimer. Zn(2+) is required as a cofactor. Requires Co(2+) as cofactor.

It catalyses the reaction N-succinyl-(2S,6S)-2,6-diaminopimelate + H2O = (2S,6S)-2,6-diaminopimelate + succinate. It participates in amino-acid biosynthesis; L-lysine biosynthesis via DAP pathway; LL-2,6-diaminopimelate from (S)-tetrahydrodipicolinate (succinylase route): step 3/3. Catalyzes the hydrolysis of N-succinyl-L,L-diaminopimelic acid (SDAP), forming succinate and LL-2,6-diaminopimelate (DAP), an intermediate involved in the bacterial biosynthesis of lysine and meso-diaminopimelic acid, an essential component of bacterial cell walls. This chain is Succinyl-diaminopimelate desuccinylase, found in Novosphingobium aromaticivorans (strain ATCC 700278 / DSM 12444 / CCUG 56034 / CIP 105152 / NBRC 16084 / F199).